We begin with the raw amino-acid sequence, 378 residues long: Putative glutamate--cysteine ligase 2 (378 aa).

Belongs to the glutamate--cysteine ligase type 2 family. YbdK subfamily.

The enzyme catalyses L-cysteine + L-glutamate + ATP = gamma-L-glutamyl-L-cysteine + ADP + phosphate + H(+). In terms of biological role, ATP-dependent carboxylate-amine ligase which exhibits weak glutamate--cysteine ligase activity. This chain is Putative glutamate--cysteine ligase 2, found in Pseudomonas paraeruginosa (strain DSM 24068 / PA7) (Pseudomonas aeruginosa (strain PA7)).